A 337-amino-acid polypeptide reads, in one-letter code: Pantothenate synthetase (337 aa).

Position 31–38 (31–38 (MGALHEGH)) interacts with ATP. Histidine 38 acts as the Proton donor in catalysis. Position 65 (glutamine 65) interacts with (R)-pantoate. A beta-alanine-binding site is contributed by glutamine 65. 152–155 (GQKD) provides a ligand contact to ATP. Glutamine 158 serves as a coordination point for (R)-pantoate. Residues valine 181 and 189–192 (LSSR) each bind ATP.

This sequence belongs to the pantothenate synthetase family. In terms of assembly, homodimer.

Its subcellular location is the cytoplasm. The catalysed reaction is (R)-pantoate + beta-alanine + ATP = (R)-pantothenate + AMP + diphosphate + H(+). It participates in cofactor biosynthesis; (R)-pantothenate biosynthesis; (R)-pantothenate from (R)-pantoate and beta-alanine: step 1/1. Functionally, catalyzes the condensation of pantoate with beta-alanine in an ATP-dependent reaction via a pantoyl-adenylate intermediate. The chain is Pantothenate synthetase from Streptomyces coelicolor (strain ATCC BAA-471 / A3(2) / M145).